Reading from the N-terminus, the 173-residue chain is dCTP deaminase, dUMP-forming (173 aa).

DCTP-binding positions include 93-98 (RSSIGR), Asp111, 119-121 (TLE), Gln138, and Tyr151. Residue Glu121 is the Proton donor/acceptor of the active site.

Belongs to the dCTP deaminase family. In terms of assembly, homotrimer.

It catalyses the reaction dCTP + 2 H2O = dUMP + NH4(+) + diphosphate. Its pathway is pyrimidine metabolism; dUMP biosynthesis; dUMP from dCTP: step 1/1. Functionally, bifunctional enzyme that catalyzes both the deamination of dCTP to dUTP and the hydrolysis of dUTP to dUMP without releasing the toxic dUTP intermediate. The protein is dCTP deaminase, dUMP-forming of Clostridium acetobutylicum (strain ATCC 824 / DSM 792 / JCM 1419 / IAM 19013 / LMG 5710 / NBRC 13948 / NRRL B-527 / VKM B-1787 / 2291 / W).